A 217-amino-acid chain; its full sequence is Imidazole glycerol phosphate synthase subunit HisH (217 aa).

Residues 3–217 (TIAIVDYGMG…IYRNFVHWKP (215 aa)) enclose the Glutamine amidotransferase type-1 domain. Catalysis depends on cysteine 82, which acts as the Nucleophile. Catalysis depends on residues histidine 197 and glutamate 199.

As to quaternary structure, heterodimer of HisH and HisF.

The protein localises to the cytoplasm. It carries out the reaction 5-[(5-phospho-1-deoxy-D-ribulos-1-ylimino)methylamino]-1-(5-phospho-beta-D-ribosyl)imidazole-4-carboxamide + L-glutamine = D-erythro-1-(imidazol-4-yl)glycerol 3-phosphate + 5-amino-1-(5-phospho-beta-D-ribosyl)imidazole-4-carboxamide + L-glutamate + H(+). It catalyses the reaction L-glutamine + H2O = L-glutamate + NH4(+). It functions in the pathway amino-acid biosynthesis; L-histidine biosynthesis; L-histidine from 5-phospho-alpha-D-ribose 1-diphosphate: step 5/9. In terms of biological role, IGPS catalyzes the conversion of PRFAR and glutamine to IGP, AICAR and glutamate. The HisH subunit catalyzes the hydrolysis of glutamine to glutamate and ammonia as part of the synthesis of IGP and AICAR. The resulting ammonia molecule is channeled to the active site of HisF. In Ralstonia nicotianae (strain ATCC BAA-1114 / GMI1000) (Ralstonia solanacearum), this protein is Imidazole glycerol phosphate synthase subunit HisH.